The primary structure comprises 672 residues: Beta-galactosidase BgaB (672 aa).

Arg-109 contacts substrate. Position 113 (Cys-113) interacts with Zn(2+). Asn-147 contacts substrate. The active-site Proton donor is Glu-148. 3 residues coordinate Zn(2+): Cys-156, Cys-158, and Cys-161. The Nucleophile role is filled by Glu-303. Residues Trp-311 and 351-354 (EKFH) contribute to the substrate site.

This sequence belongs to the glycosyl hydrolase 42 family.

It carries out the reaction Hydrolysis of terminal non-reducing beta-D-galactose residues in beta-D-galactosides.. The chain is Beta-galactosidase BgaB from Geobacillus sp. (strain Y412MC61).